The primary structure comprises 259 residues: Undecaprenyl-diphosphatase 4 (259 aa).

The next 8 membrane-spanning stretches (helical) occupy residues methionine 1–isoleucine 21, alanine 39–tyrosine 59, phenylalanine 71–leucine 91, isoleucine 99–methionine 119, isoleucine 133–isoleucine 153, alanine 173–phenylalanine 193, serine 208–isoleucine 228, and phenylalanine 239–phenylalanine 259.

This sequence belongs to the UppP family.

Its subcellular location is the cell membrane. The catalysed reaction is di-trans,octa-cis-undecaprenyl diphosphate + H2O = di-trans,octa-cis-undecaprenyl phosphate + phosphate + H(+). In terms of biological role, catalyzes the dephosphorylation of undecaprenyl diphosphate (UPP). Confers resistance to bacitracin. This Bacillus thuringiensis (strain Al Hakam) protein is Undecaprenyl-diphosphatase 4.